The following is a 102-amino-acid chain: Urease subunit beta (102 aa).

It belongs to the urease beta subunit family. Heterotrimer of UreA (gamma), UreB (beta) and UreC (alpha) subunits. Three heterotrimers associate to form the active enzyme.

It is found in the cytoplasm. It catalyses the reaction urea + 2 H2O + H(+) = hydrogencarbonate + 2 NH4(+). It functions in the pathway nitrogen metabolism; urea degradation; CO(2) and NH(3) from urea (urease route): step 1/1. This chain is Urease subunit beta, found in Acinetobacter baumannii (strain ACICU).